Here is a 694-residue protein sequence, read N- to C-terminus: Ferric reductase transmembrane component 5 (694 aa).

An N-terminal signal peptide occupies residues 1–19; it reads MLFARLVLLLVYLAPGSLA. Over 20–163 the chain is Extracellular; the sequence is KPASTKKRTQ…LDNIDKGNVY (144 aa). A glycan (N-linked (GlcNAc...) asparagine) is linked at asparagine 117. Residues 164 to 184 form a helical membrane-spanning segment; the sequence is GVTICLYWIGVLFIAAVYHFL. Over 185–222 the chain is Cytoplasmic; that stretch reads NFSRLKQTVFKNKVSAFLRGHYVLPALVHNHAMSVGRW. A helical membrane pass occupies residues 223–243; it reads FFIGLVPTRLETLVLFGYVLL. At 244–267 the chain is on the extracellular side; sequence HGFLLSSYNFDHNELLSDRRSQVL. A helical transmembrane segment spans residues 268–288; the sequence is IFLSDRAGILAFAHFPLIVLF. Residues 274–408 form the Ferric oxidoreductase domain; sequence AGILAFAHFP…GWGEWIMACA (135 aa). Residues 289 to 311 are Cytoplasmic-facing; that stretch reads GGKNSTMTWLTGIRYTAFITYHK. The heme site is built by histidine 310 and histidine 324. A helical membrane pass occupies residues 312-334; the sequence is WLGRFMLVDCTIHAIGYTYHAYI. Over 335 to 347 the chain is Extracellular; that stretch reads ENYWKYVKYSDLW. A helical membrane pass occupies residues 348–368; that stretch reads TSGRHAMIIVGILVFFSFFFF. Over 369–371 the chain is Cytoplasmic; that stretch reads RRH. The chain crosses the membrane as a helical span at residues 372–392; that stretch reads YYELFVITHIILAIGFFHACW. Heme contacts are provided by histidine 380 and histidine 394. The Extracellular portion of the chain corresponds to 393 to 403; that stretch reads KHCYKLGWGEW. A helical membrane pass occupies residues 404–424; it reads IMACALFWIADRILRLIKIAI. The region spanning 409-528 is the FAD-binding FR-type domain; the sequence is LFWIADRILR…EGPYGQSTRT (120 aa). At 425-694 the chain is on the cytoplasmic side; the sequence is FGMPWAKLKL…IEYVEEFQNW (270 aa). 473–479 is an FAD binding site; the sequence is HPFTVMD. NADP(+) is bound by residues 520–523 and 660–661; these read GPYG and CG.

Belongs to the ferric reductase (FRE) family. FAD is required as a cofactor.

It localises to the cell membrane. It carries out the reaction 2 a Fe(II)-siderophore + NADP(+) + H(+) = 2 a Fe(III)-siderophore + NADPH. Its function is as follows. Metalloreductase responsible for reducing extracellular iron and copper prior to import. Catalyzes the reductive uptake of Fe(3+)-salts and Fe(3+) bound to catecholate or hydroxamate siderophores. Fe(3+) is reduced to Fe(2+), which then dissociates from the siderophore and can be imported by the high-affinity Fe(2+) transport complex in the plasma membrane. The protein is Ferric reductase transmembrane component 5 (FRE5) of Saccharomyces cerevisiae (strain ATCC 204508 / S288c) (Baker's yeast).